The primary structure comprises 500 residues: Glutathione gamma-glutamylcysteinyltransferase 1 (500 aa).

Positions 1-221 constitute a Peptidase C83 domain; the sequence is MEVASLYRRV…GFMLVSRRSS (221 aa). Active-site residues include Cys56, His162, and Asp180.

The protein belongs to the phytochelatin synthase family. In terms of tissue distribution, expressed in roots and shoots.

The enzyme catalyses [Glu(-Cys)](n)-Gly + glutathione + H(+) = [Glu(-Cys)](n+1)-Gly + glycine. Requires cadmium for activity. In terms of biological role, involved in the synthesis of phytochelatins (PC) and homophytochelatins (hPC), the heavy-metal-binding peptides of plants. The polypeptide is Glutathione gamma-glutamylcysteinyltransferase 1 (PCS1) (Triticum aestivum (Wheat)).